The chain runs to 461 residues: D-phenylhydantoinase (461 aa).

The a divalent metal cation site is built by His-59, His-61, and Lys-151. Residue Lys-151 is modified to N6-carboxylysine. Position 156 (Tyr-156) interacts with substrate. Positions 182 and 239 each coordinate a divalent metal cation. Ser-286 is a binding site for substrate. Asp-313 serves as a coordination point for a divalent metal cation. Asn-335 provides a ligand contact to substrate.

It belongs to the metallo-dependent hydrolases superfamily. Hydantoinase/dihydropyrimidinase family. Homotetramer. The cofactor is a divalent metal cation. Carboxylation allows a single lysine to coordinate two divalent metal cations.

The enzyme catalyses D-5-phenylhydantoin + H2O = N-carbamoyl-D-phenylglycine + H(+). Functionally, catalyzes the stereospecific hydrolysis of the cyclic amide bond of D-hydantoin derivatives with an aromatic side chains at the 5'-position. Has no activity on dihydropyrimidines. The physiological function is unknown. In Escherichia coli (strain SE11), this protein is D-phenylhydantoinase.